Consider the following 264-residue polypeptide: Thymidylate synthase (264 aa).

Arg21 contacts dUMP. His51 provides a ligand contact to (6R)-5,10-methylene-5,6,7,8-tetrahydrofolate. Residue Arg126–Arg127 participates in dUMP binding. Residue Cys146 is the Nucleophile of the active site. Residues Arg166–Asp169, Asn177, and His207–Tyr209 each bind dUMP. (6R)-5,10-methylene-5,6,7,8-tetrahydrofolate is bound at residue Asp169. A (6R)-5,10-methylene-5,6,7,8-tetrahydrofolate-binding site is contributed by Ala263.

It belongs to the thymidylate synthase family. Bacterial-type ThyA subfamily. Homodimer.

It localises to the cytoplasm. The enzyme catalyses dUMP + (6R)-5,10-methylene-5,6,7,8-tetrahydrofolate = 7,8-dihydrofolate + dTMP. It participates in pyrimidine metabolism; dTTP biosynthesis. Catalyzes the reductive methylation of 2'-deoxyuridine-5'-monophosphate (dUMP) to 2'-deoxythymidine-5'-monophosphate (dTMP) while utilizing 5,10-methylenetetrahydrofolate (mTHF) as the methyl donor and reductant in the reaction, yielding dihydrofolate (DHF) as a by-product. This enzymatic reaction provides an intracellular de novo source of dTMP, an essential precursor for DNA biosynthesis. The chain is Thymidylate synthase from Buchnera aphidicola subsp. Baizongia pistaciae (strain Bp).